The primary structure comprises 395 residues: 1-deoxy-D-xylulose 5-phosphate reductoisomerase (395 aa).

The NADPH site is built by T10, G11, S12, I13, A36, and N123. Position 124 (K124) interacts with 1-deoxy-D-xylulose 5-phosphate. E125 serves as a coordination point for NADPH. D149 contacts Mn(2+). 1-deoxy-D-xylulose 5-phosphate contacts are provided by S150, E151, S185, and H208. E151 is a binding site for Mn(2+). Position 214 (G214) interacts with NADPH. Positions 221, 226, 227, and 230 each coordinate 1-deoxy-D-xylulose 5-phosphate. E230 contributes to the Mn(2+) binding site.

The protein belongs to the DXR family. Mg(2+) is required as a cofactor. Requires Mn(2+) as cofactor.

It carries out the reaction 2-C-methyl-D-erythritol 4-phosphate + NADP(+) = 1-deoxy-D-xylulose 5-phosphate + NADPH + H(+). Its pathway is isoprenoid biosynthesis; isopentenyl diphosphate biosynthesis via DXP pathway; isopentenyl diphosphate from 1-deoxy-D-xylulose 5-phosphate: step 1/6. In terms of biological role, catalyzes the NADPH-dependent rearrangement and reduction of 1-deoxy-D-xylulose-5-phosphate (DXP) to 2-C-methyl-D-erythritol 4-phosphate (MEP). In Shewanella amazonensis (strain ATCC BAA-1098 / SB2B), this protein is 1-deoxy-D-xylulose 5-phosphate reductoisomerase.